Reading from the N-terminus, the 863-residue chain is Oleate activated transcription factor 3 (863 aa).

A DNA-binding region (zn(2)-C6 fungal-type) is located at residues 19-47; it reads CTNCKKRKSKCDRTKPCGTCVRLGDVDSC. Residues 52-63 are compositionally biased toward polar residues; that stretch reads DSSGQPESSPSL. Residues 52–81 are disordered; sequence DSSGQPESSPSLNDADPLRKQSTPAERISP.

It belongs to the OAF3 family.

It localises to the cytoplasm. The protein resides in the nucleus. Its subcellular location is the mitochondrion. In terms of biological role, transcriptional inhibitor with a significantly increased number of target genes in response to oleate. The protein is Oleate activated transcription factor 3 (OAF3) of Saccharomyces cerevisiae (strain RM11-1a) (Baker's yeast).